Reading from the N-terminus, the 594-residue chain is APOBEC1 complementation factor (594 aa).

RRM domains are found at residues 56 to 134 (CEIF…ASVD), 136 to 218 (CRLF…WAEP), and 231 to 303 (KILY…LAKP). A required for nuclear localization region spans residues 359–408 (HFPATKGHLSNRALIRTPSVREIYMNVPVGAAGVRGLGGRGYLAYTGLGR). At T498 the chain carries Phosphothreonine.

In terms of assembly, part of the apolipoprotein B mRNA editing complex with APOBEC1. Interacts with TNPO2; TNPO2 may be responsible for transport of A1CF into the nucleus. Interacts with SYNCRIP. Interacts with CELF2/CUGBP2. Interacts with RBM47. In terms of tissue distribution, isoforms 1 and 2 are widely expressed while isoforms 3 and 4 are restricted to liver and small intestine.

It is found in the nucleus. It localises to the endoplasmic reticulum. The protein resides in the cytoplasm. Essential component of the apolipoprotein B mRNA editing enzyme complex which is responsible for the postranscriptional editing of a CAA codon for Gln to a UAA codon for stop in APOB mRNA. Binds to APOB mRNA and is probably responsible for docking the catalytic subunit, APOBEC1, to the mRNA to allow it to deaminate its target cytosine. The complex also seems to protect the edited APOB mRNA from nonsense-mediated decay. This chain is APOBEC1 complementation factor (A1cf), found in Rattus norvegicus (Rat).